The primary structure comprises 252 residues: ATP synthase subunit a (252 aa).

6 consecutive transmembrane segments (helical) span residues 29–49, 87–107, 117–137, 146–166, 196–216, and 219–239; these read FTNV…FLFI, FFPL…IGLF, IMIT…YGFY, LFVP…IEVI, FIVS…LPLI, and VAIT…FTVL.

This sequence belongs to the ATPase A chain family. In terms of assembly, F-type ATPases have 2 components, CF(1) - the catalytic core - and CF(0) - the membrane proton channel. CF(1) has five subunits: alpha(3), beta(3), gamma(1), delta(1), epsilon(1). CF(0) has three main subunits: a(1), b(2) and c(9-12). The alpha and beta chains form an alternating ring which encloses part of the gamma chain. CF(1) is attached to CF(0) by a central stalk formed by the gamma and epsilon chains, while a peripheral stalk is formed by the delta and b chains.

The protein resides in the cell inner membrane. Key component of the proton channel; it plays a direct role in the translocation of protons across the membrane. The chain is ATP synthase subunit a from Bartonella henselae (strain ATCC 49882 / DSM 28221 / CCUG 30454 / Houston 1) (Rochalimaea henselae).